The following is a 437-amino-acid chain: Anhydromevalonate phosphate decarboxylase (437 aa).

Positions 136 and 199 each coordinate Mn(2+). Residue D247 is the Proton acceptor of the active site.

Belongs to the UbiD family. Requires prenylated FMN as cofactor. Mn(2+) serves as cofactor.

The catalysed reaction is (2E)-3-methyl-5-phosphooxypent-2-enoate + H(+) = isopentenyl phosphate + CO2. It functions in the pathway isoprenoid biosynthesis; isopentenyl diphosphate biosynthesis via mevalonate pathway. Functionally, catalyzes the conversion of trans-anhydromevalonate 5-phosphate (tAHMP) into isopentenyl phosphate. Involved in the archaeal mevalonate (MVA) pathway, which provides fundamental precursors for isoprenoid biosynthesis, such as isopentenyl diphosphate (IPP) and dimethylallyl diphosphate (DMAPP). This chain is Anhydromevalonate phosphate decarboxylase, found in Aeropyrum pernix (strain ATCC 700893 / DSM 11879 / JCM 9820 / NBRC 100138 / K1).